The chain runs to 584 residues: Ras-specific guanine nucleotide-releasing factor RalGPS1 (584 aa).

Polar residues predominate over residues 1–13; the sequence is MDLMNGQSSSVNI. Disordered stretches follow at residues 1-29, 285-338, and 380-407; these read MDLMNGQSSSVNIAATASEKSSSSESLSD, IEPG…IPHG, and HVPSRGQAESSTLSSGISIGSSDGSELS. Residues 14-26 are compositionally biased toward low complexity; that stretch reads AATASEKSSSSES. The 239-residue stretch at 50–288 folds into the Ras-GEF domain; it reads TPEEYAGQIT…YKLSLKIEPG (239 aa). A PXXP motif is present at residues 326 to 329; sequence PTPP. A compositionally biased stretch (low complexity) spans 388-404; the sequence is ESSTLSSGISIGSSDGS. One can recognise a PH domain in the interval 458–570; sequence AVTIQGVLRR…WFKHLSAACQ (113 aa).

The protein resides in the cytoplasm. The protein localises to the cell membrane. Its function is as follows. Guanine nucleotide exchange factor. May be involved in cytoskeletal organization. In Gallus gallus (Chicken), this protein is Ras-specific guanine nucleotide-releasing factor RalGPS1 (RALGPS1).